The sequence spans 345 residues: Phosphoribosylformylglycinamidine cyclo-ligase (345 aa).

Belongs to the AIR synthase family.

The protein resides in the cytoplasm. It carries out the reaction 2-formamido-N(1)-(5-O-phospho-beta-D-ribosyl)acetamidine + ATP = 5-amino-1-(5-phospho-beta-D-ribosyl)imidazole + ADP + phosphate + H(+). It functions in the pathway purine metabolism; IMP biosynthesis via de novo pathway; 5-amino-1-(5-phospho-D-ribosyl)imidazole from N(2)-formyl-N(1)-(5-phospho-D-ribosyl)glycinamide: step 2/2. This is Phosphoribosylformylglycinamidine cyclo-ligase from Shouchella clausii (strain KSM-K16) (Alkalihalobacillus clausii).